Consider the following 163-residue polypeptide: Lipoprotein signal peptidase (163 aa).

Transmembrane regions (helical) follow at residues 9 to 29 (AWPW…SKYL), 42 to 62 (ILPF…SFLG), 67 to 87 (WQII…ILWL), and 93 to 113 (SEIM…GNFI). Catalysis depends on residues D123 and D141. A helical transmembrane segment spans residues 137 to 157 (FNVADSAICVGVFLLIVYMLL).

This sequence belongs to the peptidase A8 family.

The protein localises to the cell inner membrane. It catalyses the reaction Release of signal peptides from bacterial membrane prolipoproteins. Hydrolyzes -Xaa-Yaa-Zaa-|-(S,diacylglyceryl)Cys-, in which Xaa is hydrophobic (preferably Leu), and Yaa (Ala or Ser) and Zaa (Gly or Ala) have small, neutral side chains.. It participates in protein modification; lipoprotein biosynthesis (signal peptide cleavage). Its function is as follows. This protein specifically catalyzes the removal of signal peptides from prolipoproteins. The chain is Lipoprotein signal peptidase from Coxiella burnetii (strain Dugway 5J108-111).